The chain runs to 87 residues: Small ribosomal subunit protein bS16 (87 aa).

The protein belongs to the bacterial ribosomal protein bS16 family.

The polypeptide is Small ribosomal subunit protein bS16 (Onion yellows phytoplasma (strain OY-M)).